Consider the following 316-residue polypeptide: Transaldolase (316 aa).

The active-site Schiff-base intermediate with substrate is the lysine 132.

The protein belongs to the transaldolase family. Type 1 subfamily.

It is found in the cytoplasm. The enzyme catalyses D-sedoheptulose 7-phosphate + D-glyceraldehyde 3-phosphate = D-erythrose 4-phosphate + beta-D-fructose 6-phosphate. The protein operates within carbohydrate degradation; pentose phosphate pathway; D-glyceraldehyde 3-phosphate and beta-D-fructose 6-phosphate from D-ribose 5-phosphate and D-xylulose 5-phosphate (non-oxidative stage): step 2/3. Its function is as follows. Transaldolase is important for the balance of metabolites in the pentose-phosphate pathway. This is Transaldolase from Methylomonas aminofaciens.